Reading from the N-terminus, the 193-residue chain is Probable thymidylate kinase (193 aa).

Position 7–14 (7–14 (GIDGAGKT)) interacts with ATP.

Belongs to the thymidylate kinase family.

It catalyses the reaction dTMP + ATP = dTDP + ADP. This Thermoplasma acidophilum (strain ATCC 25905 / DSM 1728 / JCM 9062 / NBRC 15155 / AMRC-C165) protein is Probable thymidylate kinase (tmk).